The sequence spans 197 residues: SIGLEC family-like protein 1 (197 aa).

The helical transmembrane segment at 118-138 threads the bilayer; it reads GAIYAGIVIALLFLCLLPLIV. The tract at residues 160-179 is disordered; sequence VRASQELEMSLKPEEPGKPV. A compositionally biased stretch (basic and acidic residues) spans 162-176; the sequence is ASQELEMSLKPEEPG.

It is found in the membrane. The protein is SIGLEC family-like protein 1 (SIGLECL1) of Homo sapiens (Human).